The chain runs to 420 residues: Serine hydroxymethyltransferase (420 aa).

(6S)-5,6,7,8-tetrahydrofolate contacts are provided by residues Leu-121 and 125 to 127; that span reads GHL. At Lys-229 the chain carries N6-(pyridoxal phosphate)lysine. 355–357 contributes to the (6S)-5,6,7,8-tetrahydrofolate binding site; it reads SPF.

It belongs to the SHMT family. As to quaternary structure, homodimer. Pyridoxal 5'-phosphate serves as cofactor.

It localises to the cytoplasm. It catalyses the reaction (6R)-5,10-methylene-5,6,7,8-tetrahydrofolate + glycine + H2O = (6S)-5,6,7,8-tetrahydrofolate + L-serine. It functions in the pathway one-carbon metabolism; tetrahydrofolate interconversion. The protein operates within amino-acid biosynthesis; glycine biosynthesis; glycine from L-serine: step 1/1. Functionally, catalyzes the reversible interconversion of serine and glycine with tetrahydrofolate (THF) serving as the one-carbon carrier. This reaction serves as the major source of one-carbon groups required for the biosynthesis of purines, thymidylate, methionine, and other important biomolecules. Also exhibits THF-independent aldolase activity toward beta-hydroxyamino acids, producing glycine and aldehydes, via a retro-aldol mechanism. The sequence is that of Serine hydroxymethyltransferase from Chromohalobacter salexigens (strain ATCC BAA-138 / DSM 3043 / CIP 106854 / NCIMB 13768 / 1H11).